Consider the following 936-residue polypeptide: Myocardin-related transcription factor A (936 aa).

RPEL repeat units lie at residues 15 to 40 (TVLQ…PPLK), 59 to 84 (DYLK…EETS), and 103 to 128 (DDLN…PVET). The short motif at 62–100 (KRKIRSRPERAELVRMHILEETSAEPSLQAKQIKLKRAR) is the Bipartite Nuclear localization signal element. Disordered stretches follow at residues 146–185 (SSFD…TQIP), 234–258 (SQPK…KVKK), and 401–422 (SQDP…QAKP). Residues 160 to 170 (QPASQESQGSI) show a composition bias toward polar residues. The span at 239 to 254 (SFEKSQRIKKPKEPKP) shows a compositional bias: basic and acidic residues. The SAP domain maps to 368–402 (LDEMKVAELKLELKHRGLPVSGTKIDLIERLKASQ). The span at 404 to 416 (PSTATAASAKPTP) shows a compositional bias: low complexity. Positions 497–542 (DARDKDLMLREKDRQIEELTQRLKQKQELVERLRQQLEQEKRTPQH) form a coiled coil. Residues 707-755 (HNESPATPPQQPEPEPPPHSIFLTHSSPQWSKNPPGYDEAMKQQPNSCE) form a disordered region. The span at 712 to 725 (ATPPQQPEPEPPPH) shows a compositional bias: pro residues. Over residues 729 to 738 (LTHSSPQWSK) the composition is skewed to polar residues.

As to quaternary structure, interacts with srf, forming the srf-mrtfa nuclear complex which binds the 5'-CArG-3' consensus motif (CArG box) on DNA via srf. Interacts (via RPEL repeats) with globular actin (G-actin), thereby regulating its subcellular location and activity of the complex formed with srf.

The protein resides in the cytoplasm. The protein localises to the nucleus. Transcription coactivator that associates with the serum response factor (srf) transcription factor to control expression of genes regulating the cytoskeleton during development, morphogenesis and cell migration. The srf-mrtfa complex activity responds to Rho GTPase-induced changes in cellular globular actin (G-actin) concentration, thereby coupling cytoskeletal gene expression to cytoskeletal dynamics. Mrtfa binds G-actin via its RPEL repeats, regulating activity of the mrtfa-srf complex. Activity is also regulated by filamentous actin (F-actin) in the nucleus. This chain is Myocardin-related transcription factor A (mrtfa), found in Xenopus laevis (African clawed frog).